Consider the following 420-residue polypeptide: Serine/threonine transporter SstT (420 aa).

9 helical membrane-spanning segments follow: residues 14–34 (IMIGIVIGTTLGFLVPEWTFI), 40–60 (LFVGALKAIAPILVFVLIIAS), 71–91 (YVGSILVVYLLATFLAAVVAV), 172–192 (ITTVVQMIIGIAPIGILGLVF), 210–230 (LLLLIGTMAVVALVVYPAIVF), 283–303 (IPLGATINMGGAAITITIMTL), 309–329 (LGMSVPIYLALLLSIIAAVSA), 332–352 (ASGIAGGSLLLIPLACSLFGI), and 356–376 (IAMQVVGVGFIVGVVQDSIET).

It belongs to the dicarboxylate/amino acid:cation symporter (DAACS) (TC 2.A.23) family.

It localises to the cell membrane. It carries out the reaction L-serine(in) + Na(+)(in) = L-serine(out) + Na(+)(out). The enzyme catalyses L-threonine(in) + Na(+)(in) = L-threonine(out) + Na(+)(out). Involved in the import of serine and threonine into the cell, with the concomitant import of sodium (symport system). The chain is Serine/threonine transporter SstT from Enterococcus faecalis (strain ATCC 700802 / V583).